A 116-amino-acid chain; its full sequence is Small ribosomal subunit protein bS16 (116 aa).

It belongs to the bacterial ribosomal protein bS16 family.

This Chlamydia muridarum (strain MoPn / Nigg) protein is Small ribosomal subunit protein bS16.